The chain runs to 340 residues: Mitochondrial glycine transporter (340 aa).

3 Solcar repeats span residues 23–108 (PKTL…ARNG), 128–218 (LSPF…FKND), and 237–325 (RSTI…LIKS). Helical transmembrane passes span 29–54 (LISGASAGLISAISLQPFDLLKTRLQ), 83–109 (GALPSTLRTSVGAGLYFTILSSARNGI), 134–159 (LATGFIVRAVVGIITMPITIVKTRYE), 193–216 (GSFATLARDCPYAGMYVLFYELFK), 241–267 (INTSAAILAASVSTTITAPFDAIKTRL), and 300–318 (GLSLRFGRKGLSSGISWCI).

It belongs to the mitochondrial carrier (TC 2.A.29) family. SLC25A38 subfamily.

It is found in the mitochondrion inner membrane. It catalyses the reaction glycine(in) = glycine(out). Mitochondrial glycine transporter that imports glycine into the mitochondrial matrix. Plays an important role in providing glycine for the first enzymatic step in heme biosynthesis, the condensation of glycine with succinyl-CoA to produce 5-aminolevulinate (ALA) in the mitochondrial matrix. The sequence is that of Mitochondrial glycine transporter from Debaryomyces hansenii (strain ATCC 36239 / CBS 767 / BCRC 21394 / JCM 1990 / NBRC 0083 / IGC 2968) (Yeast).